The following is a 449-amino-acid chain: Chromosomal replication initiator protein DnaA (449 aa).

The interval 1 to 69 (MEKVWLEAQS…VEAISSLTSV (69 aa)) is domain I, interacts with DnaA modulators. The domain II stretch occupies residues 69–112 (VKYQIEFKITEKIPLESKPVDNFTPVIKDNEPSKETNKNIDITA). Residues 113-329 (NLNPKYTFDS…GMLIRLGAYA (217 aa)) form a domain III, AAA+ region region. ATP contacts are provided by Gly157, Gly159, Lys160, and Thr161. The tract at residues 330 to 449 (SLTGSEITLN…VENLKKELIT (120 aa)) is domain IV, binds dsDNA.

This sequence belongs to the DnaA family. Oligomerizes as a right-handed, spiral filament on DNA at oriC.

The protein localises to the cytoplasm. Its function is as follows. Plays an essential role in the initiation and regulation of chromosomal replication. ATP-DnaA binds to the origin of replication (oriC) to initiate formation of the DNA replication initiation complex once per cell cycle. Binds the DnaA box (a 9 base pair repeat at the origin) and separates the double-stranded (ds)DNA. Forms a right-handed helical filament on oriC DNA; dsDNA binds to the exterior of the filament while single-stranded (ss)DNA is stabiized in the filament's interior. The ATP-DnaA-oriC complex binds and stabilizes one strand of the AT-rich DNA unwinding element (DUE), permitting loading of DNA polymerase. After initiation quickly degrades to an ADP-DnaA complex that is not apt for DNA replication. Binds acidic phospholipids. This chain is Chromosomal replication initiator protein DnaA, found in Geotalea uraniireducens (strain Rf4) (Geobacter uraniireducens).